Consider the following 81-residue polypeptide: Small ribosomal subunit protein bS16 (81 aa).

This sequence belongs to the bacterial ribosomal protein bS16 family.

The polypeptide is Small ribosomal subunit protein bS16 (Lachnospira eligens (strain ATCC 27750 / DSM 3376 / VPI C15-48 / C15-B4) (Eubacterium eligens)).